Reading from the N-terminus, the 214-residue chain is FMN-dependent NADH:quinone oxidoreductase 1 (214 aa).

Residues 17-19 (SWS) and 144-147 (SAGG) each bind FMN.

Belongs to the azoreductase type 1 family. As to quaternary structure, homodimer. FMN serves as cofactor.

The catalysed reaction is 2 a quinone + NADH + H(+) = 2 a 1,4-benzosemiquinone + NAD(+). The enzyme catalyses N,N-dimethyl-1,4-phenylenediamine + anthranilate + 2 NAD(+) = 2-(4-dimethylaminophenyl)diazenylbenzoate + 2 NADH + 2 H(+). In terms of biological role, quinone reductase that provides resistance to thiol-specific stress caused by electrophilic quinones. Functionally, also exhibits azoreductase activity. Catalyzes the reductive cleavage of the azo bond in aromatic azo compounds to the corresponding amines. This is FMN-dependent NADH:quinone oxidoreductase 1 from Lactococcus lactis subsp. lactis (strain IL1403) (Streptococcus lactis).